The following is a 334-amino-acid chain: Rhomboid-like protein 14, mitochondrial (334 aa).

The transit peptide at 1–87 directs the protein to the mitochondrion; sequence MENFGEGRRS…RLFLSAFYHV (87 aa). 4 consecutive transmembrane segments (helical) span residues 114 to 134, 146 to 166, 176 to 196, and 197 to 217; these read EFAS…LLLA, AYYN…KVVL, VYGI…LVQM, and FVPN…IIYL. Ser156 functions as the Nucleophile in the catalytic mechanism. The Charge relay system role is filled by His206. A RanBP2-type zinc finger spans residues 273 to 302; it reads GPGIWRCQSCTYDNSGWLSACEMCGSGRAR.

It belongs to the peptidase S54 family.

Its subcellular location is the mitochondrion membrane. Functionally, probable rhomboid-type serine protease that catalyzes intramembrane proteolysis. May function in the heat-shock response pathway. This chain is Rhomboid-like protein 14, mitochondrial, found in Arabidopsis thaliana (Mouse-ear cress).